The chain runs to 348 residues: Phenylalanine--tRNA ligase alpha subunit (348 aa).

Glutamate 259 lines the Mg(2+) pocket.

Belongs to the class-II aminoacyl-tRNA synthetase family. Phe-tRNA synthetase alpha subunit type 1 subfamily. Tetramer of two alpha and two beta subunits. Requires Mg(2+) as cofactor.

The protein localises to the cytoplasm. The enzyme catalyses tRNA(Phe) + L-phenylalanine + ATP = L-phenylalanyl-tRNA(Phe) + AMP + diphosphate + H(+). This is Phenylalanine--tRNA ligase alpha subunit from Lacticaseibacillus casei (strain BL23) (Lactobacillus casei).